The primary structure comprises 389 residues: MTHSAILGSKTYNQYFPKLTPGQLAENGKIKVIVGMSGGVDSSVSAFILQQQGYQVEGLFMKNWEEDDDTDYCTAAADLADAQAVCDKLGIRLHKINFATEYWDNVFEHFLSEYKAGRTPNPDILCNKEIKFKAFLEYAAEDLGADYIATGHYVRRSGPDHDAHLLRGLDNNKDQSYFLHALSKKQVGQSLFPVGEVEKTVVRAVAEELGLITAKKKDSTGICFIGERKFKDFLARFLPAQPGDIKTTEGEVIGRHQGLMYHTLGQRKGLGIGGIKGKDENAWYVVEKDLKNNVLVVAQGHDNSALQSSGLIAKQLTWVSEQPLRKTLHCTVKTRYRQTDIACEVVPVNDDTVEVHFDEPQIAVTPGQSAVFYQGEECLGGGIIETQIK.

Residues 35-42 and methionine 61 each bind ATP; that span reads GMSGGVDS. The tract at residues 121-123 is interaction with target base in tRNA; it reads NPD. Cysteine 126 acts as the Nucleophile in catalysis. Cysteine 126 and cysteine 223 form a disulfide bridge. Glycine 151 contributes to the ATP binding site. Residues 173 to 175 are interaction with tRNA; the sequence is KDQ. Cysteine 223 serves as the catalytic Cysteine persulfide intermediate. The tract at residues 335–336 is interaction with tRNA; the sequence is RY.

Belongs to the MnmA/TRMU family.

Its subcellular location is the cytoplasm. The catalysed reaction is S-sulfanyl-L-cysteinyl-[protein] + uridine(34) in tRNA + AH2 + ATP = 2-thiouridine(34) in tRNA + L-cysteinyl-[protein] + A + AMP + diphosphate + H(+). Catalyzes the 2-thiolation of uridine at the wobble position (U34) of tRNA, leading to the formation of s(2)U34. This Actinobacillus succinogenes (strain ATCC 55618 / DSM 22257 / CCUG 43843 / 130Z) protein is tRNA-specific 2-thiouridylase MnmA.